A 477-amino-acid chain; its full sequence is ETS translocation variant 1 (477 aa).

Phosphoserine is present on Ser94. Residues Pro128–Thr179 are disordered. 2 positions are modified to phosphoserine; by RPS6KA1 and RPS6KA5: Ser191 and Ser216. Lys317 participates in a covalent cross-link: Glycyl lysine isopeptide (Lys-Gly) (interchain with G-Cter in SUMO2). A DNA-binding region (ETS) is located at residues Leu335–Val415.

The protein belongs to the ETS family. In terms of processing, sumoylated. Post-translationally, phosphorylated at Ser-191 and Ser-216 by RPS6KA1 and RPS6KA5; phosphorylation activates transcriptional activity. In terms of tissue distribution, abundant in kidney. Moderate levels seen in the heart, brain, lung, embryo and lower levels seen in spleen, intestine, testis and thymus.

It is found in the nucleus. Transcriptional activator that binds to DNA sequences containing the consensus pentanucleotide 5'-CGGA[AT]-3'. Required for olfactory dopaminergic neuron differentiation; may directly activate expression of tyrosine hydroxylase (TH). This chain is ETS translocation variant 1, found in Mus musculus (Mouse).